We begin with the raw amino-acid sequence, 213 residues long: Orotate phosphoribosyltransferase (213 aa).

A 5-phospho-alpha-D-ribose 1-diphosphate-binding site is contributed by Lys26. 34 to 35 (FF) is a binding site for orotate. Residues 72 to 73 (YK), Arg99, Lys100, Lys103, His105, and 124 to 132 (DDVITAGTA) contribute to the 5-phospho-alpha-D-ribose 1-diphosphate site. Orotate contacts are provided by Thr128 and Arg156.

This sequence belongs to the purine/pyrimidine phosphoribosyltransferase family. PyrE subfamily. As to quaternary structure, homodimer. It depends on Mg(2+) as a cofactor.

It catalyses the reaction orotidine 5'-phosphate + diphosphate = orotate + 5-phospho-alpha-D-ribose 1-diphosphate. Its pathway is pyrimidine metabolism; UMP biosynthesis via de novo pathway; UMP from orotate: step 1/2. Catalyzes the transfer of a ribosyl phosphate group from 5-phosphoribose 1-diphosphate to orotate, leading to the formation of orotidine monophosphate (OMP). In Klebsiella pneumoniae subsp. pneumoniae (strain ATCC 700721 / MGH 78578), this protein is Orotate phosphoribosyltransferase.